The sequence spans 354 residues: Coiled-coil domain-containing protein 86 (354 aa).

The disordered stretch occupies residues 1-354; it reads MDTPLRRSRR…QPPQRPATKV (354 aa). 2 positions are modified to phosphoserine: S18 and S24. Over residues 31–44 the composition is skewed to basic and acidic residues; sequence VLVEFESNPKETGE. A phosphoserine mark is found at S47 and S53. Positions 49-58 are enriched in low complexity; it reads PGLGSPSRQP. Phosphothreonine is present on T60. A phosphoserine mark is found at S61, S64, S75, S86, S105, S108, S123, and S183. Positions 97 to 107 are enriched in polar residues; that stretch reads FPQNQPESSPE. Basic and acidic residues predominate over residues 199–211; the sequence is PAREGPAPKKREG. Phosphoserine is present on residues S212 and S213. Basic residues predominate over residues 232-248; the sequence is GKPKSGRVWKDRSKKRF. Basic and acidic residues-rich tracts occupy residues 267–289 and 297–311; these read DRQE…ERRR and AENL…RKAE. Residues 274-317 adopt a coiled-coil conformation; sequence AKDFARHLEEEKERRRQEKKKRRAENLRRRLENERKAEIVQVIR. Residues 320-330 are compositionally biased toward basic residues; the sequence is AKLKRAKKKQL. Citrulline is present on R336.

Post-translationally, citrullinated by PADI4.

The protein localises to the nucleus. Its subcellular location is the chromosome. It is found in the nucleolus. Required for proper chromosome segregation during mitosis and error-free mitotic progression. The polypeptide is Coiled-coil domain-containing protein 86 (Bos taurus (Bovine)).